Here is a 474-residue protein sequence, read N- to C-terminus: Phosphomannomutase (474 aa).

The Phosphoserine intermediate role is filled by S101. Mg(2+)-binding residues include S101, D242, D244, and D246.

It belongs to the phosphohexose mutase family. It depends on Mg(2+) as a cofactor.

The enzyme catalyses alpha-D-mannose 1-phosphate = D-mannose 6-phosphate. This is Phosphomannomutase (noeK) from Sinorhizobium fredii (strain NBRC 101917 / NGR234).